The sequence spans 238 residues: Uridylate kinase (238 aa).

12–15 is a binding site for ATP; the sequence is KLSG. Residues 20-25 form an involved in allosteric activation by GTP region; that stretch reads GQQGFG. Residue Gly54 participates in UMP binding. Residues Gly55 and Arg59 each coordinate ATP. UMP-binding positions include Asp74 and 135–142; that span reads TGNPFFTT. ATP contacts are provided by Thr162, Asn163, Tyr168, and Asp171.

It belongs to the UMP kinase family. In terms of assembly, homohexamer.

It is found in the cytoplasm. The enzyme catalyses UMP + ATP = UDP + ADP. The protein operates within pyrimidine metabolism; CTP biosynthesis via de novo pathway; UDP from UMP (UMPK route): step 1/1. Allosterically activated by GTP. Inhibited by UTP. Functionally, catalyzes the reversible phosphorylation of UMP to UDP. In Bradyrhizobium diazoefficiens (strain JCM 10833 / BCRC 13528 / IAM 13628 / NBRC 14792 / USDA 110), this protein is Uridylate kinase.